A 394-amino-acid polypeptide reads, in one-letter code: Elongation factor Tu (394 aa).

Residues 10-204 (KPHVNVGTIG…HLDTYIPEPE (195 aa)) form the tr-type G domain. The G1 stretch occupies residues 19-26 (GHVDHGKT). 19–26 (GHVDHGKT) is a GTP binding site. Position 26 (threonine 26) interacts with Mg(2+). Residues 60 to 64 (GITIN) are G2. The segment at 81–84 (DCPG) is G3. GTP is bound by residues 81 to 85 (DCPGH) and 136 to 139 (NKCD). Positions 136-139 (NKCD) are G4. The tract at residues 174 to 176 (SAL) is G5.

Belongs to the TRAFAC class translation factor GTPase superfamily. Classic translation factor GTPase family. EF-Tu/EF-1A subfamily. Monomer.

The protein localises to the cytoplasm. It carries out the reaction GTP + H2O = GDP + phosphate + H(+). Functionally, GTP hydrolase that promotes the GTP-dependent binding of aminoacyl-tRNA to the A-site of ribosomes during protein biosynthesis. This Klebsiella pneumoniae subsp. pneumoniae (strain ATCC 700721 / MGH 78578) protein is Elongation factor Tu.